A 205-amino-acid polypeptide reads, in one-letter code: MQKSYIKLLVLGDSKTGKTTMMMTYSTGSFPTGYVPSHVDATSLDIEYNKQVCHVGFWDSSALAEFDNTRPSTYPNTNVIILCFSIDSPTSFENVSKKWIPEIRQYAPSIHTPIILLGTKCDLREDENTINLLKENNQMPPISYKQGLALSKEIKATMYLECSSLCNQGVNEIFKQVVRCHLYCKDGVLNDPTTTTSNTSKCIIQ.

Gly-12 to Thr-19 serves as a coordination point for GTP. Residues Tyr-34–Thr-42 carry the Effector region motif. Residues Asp-59–Leu-63 and Thr-119–Asp-122 contribute to the GTP site. Cys-202 carries the post-translational modification Cysteine methyl ester. Cys-202 carries S-geranylgeranyl cysteine lipidation. Positions Ile-203–Gln-205 are cleaved as a propeptide — removed in mature form.

Belongs to the small GTPase superfamily. Rho family.

The protein resides in the cell membrane. The polypeptide is Rho-related protein racI (racI) (Dictyostelium discoideum (Social amoeba)).